The following is a 351-amino-acid chain: NADP-dependent isopropanol dehydrogenase (351 aa).

Residues cysteine 37, histidine 59, glutamate 60, and aspartate 150 each coordinate Zn(2+). Residues 175–178 (IGAV), 198–200 (GSR), tyrosine 218, 265–267 (INY), and lysine 340 each bind NADP(+).

This sequence belongs to the zinc-containing alcohol dehydrogenase family. As to quaternary structure, homotetramer. Requires Zn(2+) as cofactor.

The catalysed reaction is propan-2-ol + NADP(+) = acetone + NADPH + H(+). Functionally, alcohol dehydrogenase with a preference for medium chain secondary alcohols, such as 2-butanol and isopropanol. Has very low activity with primary alcohols, such as ethanol. Under physiological conditions, the enzyme reduces aldehydes and 2-ketones to produce secondary alcohols. Is active with acetaldehyde and propionaldehyde. This Clostridium beijerinckii (Clostridium MP) protein is NADP-dependent isopropanol dehydrogenase (adh).